The primary structure comprises 484 residues: Serine protease HTR4 (484 aa).

Positions 1–28 are cleaved as a signal peptide; sequence MARPLQRPAGLGPFVLLWLLLPAPSGRG. Residues 36 to 114 form the IGFBP N-terminal domain; that stretch reads PVPRCPAACE…GRPLGTCGCP (79 aa). 8 disulfide bridges follow: Cys-40-Cys-66, Cys-44-Cys-68, Cys-49-Cys-69, Cys-55-Cys-72, Cys-80-Cys-94, Cys-88-Cys-111, Cys-113-Cys-132, and Cys-121-Cys-157. Residues 105-159 form the Kazal-like domain; sequence GRPLGTCGCPAAGATVCGSDGRTYRSLCALRAENRAARLRGALPAVPVQKGDCGD. The tract at residues 209–369 is serine protease; that stretch reads ASGFIVSEDG…IPSDRIRQFL (161 aa). Catalysis depends on charge relay system residues His-225, Asp-255, and Ser-333. The region spanning 390–472 is the PDZ domain; that stretch reads LRMLPLTMNL…LSLLVRRKSQ (83 aa).

Belongs to the peptidase S1C family.

It is found in the secreted. In terms of biological role, serine protease. This is Serine protease HTR4 (HTRA4) from Bos taurus (Bovine).